The sequence spans 230 residues: L-aspartate/glutamate-specific racemase (230 aa).

Substrate is bound by residues M10, Q52, and 83–85 (TNT). Catalysis depends on T83, which acts as the Proton donor. The active-site Proton acceptor is the C197. Residue 198 to 199 (TE) coordinates substrate.

The protein belongs to the aspartate/glutamate racemases family. In terms of assembly, homodimer.

It catalyses the reaction L-glutamate = D-glutamate. The catalysed reaction is L-aspartate = D-aspartate. Exhibits racemase activity for both L-glutamate and L-aspartate. The polypeptide is L-aspartate/glutamate-specific racemase (Escherichia coli O157:H7).